The primary structure comprises 328 residues: Phosphate acyltransferase (328 aa).

Belongs to the PlsX family. In terms of assembly, homodimer. Probably interacts with PlsY.

It is found in the cytoplasm. The enzyme catalyses a fatty acyl-[ACP] + phosphate = an acyl phosphate + holo-[ACP]. It participates in lipid metabolism; phospholipid metabolism. In terms of biological role, catalyzes the reversible formation of acyl-phosphate (acyl-PO(4)) from acyl-[acyl-carrier-protein] (acyl-ACP). This enzyme utilizes acyl-ACP as fatty acyl donor, but not acyl-CoA. This chain is Phosphate acyltransferase, found in Mycoplasma pneumoniae (strain ATCC 29342 / M129 / Subtype 1) (Mycoplasmoides pneumoniae).